Reading from the N-terminus, the 162-residue chain is Protein mmf1, mitochondrial (162 aa).

This sequence belongs to the RutC family.

It localises to the mitochondrion. Its subcellular location is the cytoplasm. In terms of biological role, plays a role in the maintenance of mitochondrial DNA. This Schizosaccharomyces pombe (strain 972 / ATCC 24843) (Fission yeast) protein is Protein mmf1, mitochondrial (mmf1).